Consider the following 154-residue polypeptide: Lipoprotein signal peptidase (154 aa).

Transmembrane regions (helical) follow at residues 57 to 77 (LVLS…MIKY) and 86 to 103 (ISLS…YDRV). Active-site residues include D110 and D129. Residues 124-144 (VFNVADICVVVGTIMIAIFIV) traverse the membrane as a helical segment.

This sequence belongs to the peptidase A8 family.

Its subcellular location is the cell membrane. The enzyme catalyses Release of signal peptides from bacterial membrane prolipoproteins. Hydrolyzes -Xaa-Yaa-Zaa-|-(S,diacylglyceryl)Cys-, in which Xaa is hydrophobic (preferably Leu), and Yaa (Ala or Ser) and Zaa (Gly or Ala) have small, neutral side chains.. The protein operates within protein modification; lipoprotein biosynthesis (signal peptide cleavage). Functionally, this protein specifically catalyzes the removal of signal peptides from prolipoproteins. In Clostridium acetobutylicum (strain ATCC 824 / DSM 792 / JCM 1419 / IAM 19013 / LMG 5710 / NBRC 13948 / NRRL B-527 / VKM B-1787 / 2291 / W), this protein is Lipoprotein signal peptidase.